A 393-amino-acid polypeptide reads, in one-letter code: NAD(P)H-quinone oxidoreductase subunit H, chloroplastic (393 aa).

The protein belongs to the complex I 49 kDa subunit family. NDH is composed of at least 16 different subunits, 5 of which are encoded in the nucleus.

The protein resides in the plastid. The protein localises to the chloroplast thylakoid membrane. It carries out the reaction a plastoquinone + NADH + (n+1) H(+)(in) = a plastoquinol + NAD(+) + n H(+)(out). The enzyme catalyses a plastoquinone + NADPH + (n+1) H(+)(in) = a plastoquinol + NADP(+) + n H(+)(out). In terms of biological role, NDH shuttles electrons from NAD(P)H:plastoquinone, via FMN and iron-sulfur (Fe-S) centers, to quinones in the photosynthetic chain and possibly in a chloroplast respiratory chain. The immediate electron acceptor for the enzyme in this species is believed to be plastoquinone. Couples the redox reaction to proton translocation, and thus conserves the redox energy in a proton gradient. This chain is NAD(P)H-quinone oxidoreductase subunit H, chloroplastic, found in Oenothera biennis (German evening primrose).